The chain runs to 363 residues: UDP-N-acetylglucosamine--N-acetylmuramyl-(pentapeptide) pyrophosphoryl-undecaprenol N-acetylglucosamine transferase (363 aa).

Residues 15–17 (TGG), Asn127, Arg169, Ser197, Ile251, 270–275 (ALTVSE), and Gln296 contribute to the UDP-N-acetyl-alpha-D-glucosamine site.

This sequence belongs to the glycosyltransferase 28 family. MurG subfamily.

It localises to the cell inner membrane. The enzyme catalyses di-trans,octa-cis-undecaprenyl diphospho-N-acetyl-alpha-D-muramoyl-L-alanyl-D-glutamyl-meso-2,6-diaminopimeloyl-D-alanyl-D-alanine + UDP-N-acetyl-alpha-D-glucosamine = di-trans,octa-cis-undecaprenyl diphospho-[N-acetyl-alpha-D-glucosaminyl-(1-&gt;4)]-N-acetyl-alpha-D-muramoyl-L-alanyl-D-glutamyl-meso-2,6-diaminopimeloyl-D-alanyl-D-alanine + UDP + H(+). It functions in the pathway cell wall biogenesis; peptidoglycan biosynthesis. Cell wall formation. Catalyzes the transfer of a GlcNAc subunit on undecaprenyl-pyrophosphoryl-MurNAc-pentapeptide (lipid intermediate I) to form undecaprenyl-pyrophosphoryl-MurNAc-(pentapeptide)GlcNAc (lipid intermediate II). In Dichelobacter nodosus (strain VCS1703A), this protein is UDP-N-acetylglucosamine--N-acetylmuramyl-(pentapeptide) pyrophosphoryl-undecaprenol N-acetylglucosamine transferase.